The chain runs to 400 residues: Nicotinate phosphoribosyltransferase (400 aa).

Histidine 220 carries the post-translational modification Phosphohistidine; by autocatalysis.

It belongs to the NAPRTase family. Transiently phosphorylated on a His residue during the reaction cycle. Phosphorylation strongly increases the affinity for substrates and increases the rate of nicotinate D-ribonucleotide production. Dephosphorylation regenerates the low-affinity form of the enzyme, leading to product release.

It carries out the reaction nicotinate + 5-phospho-alpha-D-ribose 1-diphosphate + ATP + H2O = nicotinate beta-D-ribonucleotide + ADP + phosphate + diphosphate. The protein operates within cofactor biosynthesis; NAD(+) biosynthesis; nicotinate D-ribonucleotide from nicotinate: step 1/1. Functionally, catalyzes the synthesis of beta-nicotinate D-ribonucleotide from nicotinate and 5-phospho-D-ribose 1-phosphate at the expense of ATP. This Enterobacter sp. (strain 638) protein is Nicotinate phosphoribosyltransferase.